A 126-amino-acid chain; its full sequence is Aspartate 1-decarboxylase (126 aa).

Residue S25 is the Schiff-base intermediate with substrate; via pyruvic acid of the active site. Pyruvic acid (Ser) is present on S25. T57 contacts substrate. The active-site Proton donor is Y58. 73-75 (GAA) contributes to the substrate binding site.

It belongs to the PanD family. In terms of assembly, heterooctamer of four alpha and four beta subunits. Pyruvate is required as a cofactor. Post-translationally, is synthesized initially as an inactive proenzyme, which is activated by self-cleavage at a specific serine bond to produce a beta-subunit with a hydroxyl group at its C-terminus and an alpha-subunit with a pyruvoyl group at its N-terminus.

The protein localises to the cytoplasm. The enzyme catalyses L-aspartate + H(+) = beta-alanine + CO2. The protein operates within cofactor biosynthesis; (R)-pantothenate biosynthesis; beta-alanine from L-aspartate: step 1/1. Catalyzes the pyruvoyl-dependent decarboxylation of aspartate to produce beta-alanine. In Marinomonas sp. (strain MWYL1), this protein is Aspartate 1-decarboxylase.